A 134-amino-acid polypeptide reads, in one-letter code: Histone H3-like centromeric protein A (134 aa).

A compositionally biased stretch (basic residues) spans 1-14 (MGPRRKPQTPRRRP). The segment at 1–34 (MGPRRKPQTPRRRPSSPAPGPSRQSSSVGSQTLR) is disordered. A N,N,N-trimethylglycine modification is found at G2. A phosphoserine mark is found at S16 and S22. The tract at residues 34-48 (RRRQKFMWLKEIKTL) is important for flexibility of DNA ends that protrude from nucleosomes. Residues 35–134 (RRQKFMWLKE…RIRGFEGGLP (100 aa)) are H3-like. S62 carries the post-translational modification Phosphoserine. Residues 69-110 (CEKFSRGVDFWWQAQALLALQEAAEAFLIHLFEDAYLLSLHA) are CATD.

The protein belongs to the histone H3 family. As to quaternary structure, component of centromeric nucleosomes, where DNA is wrapped around a histone octamer core. The octamer contains two molecules each of H2A, H2B, CENPA and H4 assembled in one CENPA-H4 heterotetramer and two H2A-H2B heterodimers. CENPA modulates the DNA-binding characteristics of nucleosomes so that protruding DNA ends have higher flexibility than in nucleosomes containing conventional histone H3. Inhibits binding of histone H1 to nucleosomes, since histone H1 binds preferentially to rigid DNA linkers that protrude from nucleosomes. Nucleosomes containing CENPA also contain histone H2A variants such as MACROH2A and H2A.Z/H2AZ1. The CENPA-H4 heterotetramer is more compact and structurally more rigid than corresponding H3-H4 heterotetramers. Can assemble into nucleosomes that contain both CENPA and histone H3.3; these nucleosomes interact with a single CENPC chain. Heterotrimer composed of HJURP, CENPA and histone H4, where HJURP interacts with the dimer formed by CENPA and histone H4 and prevents tetramerization of CENPA and H4. Component of the CENPA-NAC complex, at least composed of CENPA, CENPC, CENPH, CENPM, CENPN, CENPT and CENPU. Interacts (via CATD domain) with HJURP; the interaction is direct and is required for its localization to centromeres. Interacts with CENPC, CENPN and CENPT; interaction is direct. Part of a centromere complex consisting of CENPA, CENPT and CENPW. Identified in centromere complexes containing histones H2A, H2B and H4, and at least CENPA, CENPB, CENPC, CENPT, CENPN, HJURP, SUPT16H, SSRP1 and RSF1. Can self-associate. The CENPA-H4 heterotetramer can bind DNA by itself (in vitro). Interacts with CDK1, PPP1CA and RBBP7. Poly-ADP-ribosylated by PARP1. Post-translationally, trimethylated by NTMT1 at the N-terminal glycine after cleavage of Met-1. Methylation is low before incorporation into nucleosomes and increases with cell cycle progression, with the highest levels in mitotic nucleosomes. In terms of processing, phosphorylated by CDK1 at Ser-62 during early mitosis; this abolishes association with chromatin and centromeres, prevents interaction with HJURP and thereby prevents premature assembly of CENPA into centromeres. Dephosphorylated at Ser-62 by PPP1CA during late mitosis.

The protein localises to the nucleus. Its subcellular location is the chromosome. It is found in the centromere. Its function is as follows. Histone H3-like nucleosomal protein that is specifically found in centromeric nucleosomes. Replaces conventional H3 in the nucleosome core of centromeric chromatin that serves as an assembly site for the inner kinetochore. The presence of CENPA subtly modifies the nucleosome structure and the way DNA is wrapped around the nucleosome and gives rise to protruding DNA ends that are less well-ordered and rigid compared to nucleosomes containing histone H3. May serve as an epigenetic mark that propagates centromere identity through replication and cell division. Required for recruitment and assembly of kinetochore proteins, and as a consequence required for progress through mitosis, chromosome segregation and cytokinesis. This chain is Histone H3-like centromeric protein A (Cenpa), found in Mus musculus (Mouse).